A 237-amino-acid chain; its full sequence is MKPETFYNLLAEQNLPLSDQQKEQFERYFELLVEWNEKINLTAITDKEEVYLKHFYDSIAPILQGLIPNETIKLLDIGAGAGFPSLPMKILYPELDVTIIDSLNKRINFLQLLAQELDLNGVHFYHGRAEDFAQDKNFRAQYDFVTARAVARMQVLSELTIPYLKVGGKLLALKASNAPEELLEAKNALNLLFSKVEDNLSYALPNRDPRYITVVEKKKETPNKYPRKAGMPNKRPL.

Residues Gly78, Phe83, 129–130 (AE), and Arg148 each bind S-adenosyl-L-methionine. A disordered region spans residues 218-237 (KKETPNKYPRKAGMPNKRPL).

This sequence belongs to the methyltransferase superfamily. RNA methyltransferase RsmG family.

The protein localises to the cytoplasm. Functionally, specifically methylates the N7 position of a guanine in 16S rRNA. In Streptococcus pneumoniae (strain JJA), this protein is Ribosomal RNA small subunit methyltransferase G.